The following is a 306-amino-acid chain: Large ribosomal subunit protein uL18 (306 aa).

It belongs to the universal ribosomal protein uL18 family. Component of the large ribosomal subunit (LSU).

The protein localises to the cytoplasm. It is found in the nucleus. In terms of biological role, component of the ribosome, a large ribonucleoprotein complex responsible for the synthesis of proteins in the cell. The small ribosomal subunit (SSU) binds messenger RNAs (mRNAs) and translates the encoded message by selecting cognate aminoacyl-transfer RNA (tRNA) molecules. The large subunit (LSU) contains the ribosomal catalytic site termed the peptidyl transferase center (PTC), which catalyzes the formation of peptide bonds, thereby polymerizing the amino acids delivered by tRNAs into a polypeptide chain. The nascent polypeptides leave the ribosome through a tunnel in the LSU and interact with protein factors that function in enzymatic processing, targeting, and the membrane insertion of nascent chains at the exit of the ribosomal tunnel. The chain is Large ribosomal subunit protein uL18 (RPL5) from Theileria annulata.